The following is an 87-amino-acid chain: UPF0213 protein SSA_0709 (87 aa).

The region spanning 3–78 (NKAYMYVLEC…KKKTRQAKLA (76 aa)) is the GIY-YIG domain.

Belongs to the UPF0213 family.

This Streptococcus sanguinis (strain SK36) protein is UPF0213 protein SSA_0709.